The following is a 78-amino-acid chain: Large ribosomal subunit protein bL28 (78 aa).

The protein belongs to the bacterial ribosomal protein bL28 family.

This is Large ribosomal subunit protein bL28 from Methylobacillus flagellatus (strain ATCC 51484 / DSM 6875 / VKM B-1610 / KT).